Consider the following 253-residue polypeptide: Major prion protein (253 aa).

The N-terminal stretch at 1–22 is a signal peptide; the sequence is MANLGCWMLVLFVATWSDLGLC. Residues 23–230 form an interaction with GRB2, ERI3 and SYN1 region; sequence KKRPKPGGWN…ESQAYYQRGS (208 aa). Residues 26 to 108 form a disordered region; that stretch reads PKPGGWNTGG…WNKPSKPKTN (83 aa). Tandem repeats lie at residues 51–59, 60–67, 68–75, 76–83, and 84–91. Residues 51 to 91 are 5 X 8 AA tandem repeats of P-H-G-G-G-W-G-Q; sequence PQGGGGWGQPHGGGWGQPHGGGWGQPHGGGWGQPHGGGWGQ. Residues 52–95 show a composition bias toward gly residues; the sequence is QGGGGWGQPHGGGWGQPHGGGWGQPHGGGWGQPHGGGWGQGGGT. 12 residues coordinate Cu(2+): histidine 61, glycine 62, glycine 63, histidine 69, glycine 70, glycine 71, histidine 77, glycine 78, glycine 79, histidine 85, glycine 86, and glycine 87. Cysteine 179 and cysteine 214 form a disulfide bridge. N-linked (GlcNAc...) asparagine glycosylation is found at asparagine 181 and asparagine 197. Residue serine 230 is the site of GPI-anchor amidated serine attachment. Positions 231-253 are cleaved as a propeptide — removed in mature form; the sequence is SMVLFSSPPVILLISFLIFLIVG.

The protein belongs to the prion family. Monomer and homodimer. Has a tendency to aggregate into amyloid fibrils containing a cross-beta spine, formed by a steric zipper of superposed beta-strands. Soluble oligomers may represent an intermediate stage on the path to fibril formation. Copper binding may promote oligomerization. Interacts with GRB2, APP, ERI3/PRNPIP and SYN1. Mislocalized cytosolically exposed PrP interacts with MGRN1; this interaction alters MGRN1 subcellular location and causes lysosomal enlargement. Interacts with KIAA1191.

The protein resides in the cell membrane. The protein localises to the golgi apparatus. Functionally, its primary physiological function is unclear. Has cytoprotective activity against internal or environmental stresses. May play a role in neuronal development and synaptic plasticity. May be required for neuronal myelin sheath maintenance. May play a role in iron uptake and iron homeostasis. Soluble oligomers are toxic to cultured neuroblastoma cells and induce apoptosis (in vitro). Association with GPC1 (via its heparan sulfate chains) targets PRNP to lipid rafts. Also provides Cu(2+) or Zn(2+) for the ascorbate-mediated GPC1 deaminase degradation of its heparan sulfate side chains. The sequence is that of Major prion protein (PRNP) from Hylobates lar (Lar gibbon).